The following is a 507-amino-acid chain: Proton-coupled zinc antiporter SLC30A1 (507 aa).

The Cytoplasmic segment spans residues 1 to 10 (MGCWGRNRGR). A helical membrane pass occupies residues 11–31 (LLCMLALTFMFMVLEVVVSRV). Residues 32–35 (TSSL) are Extracellular-facing. The helical transmembrane segment at 36–56 (AMLSDSFHMLSDVLALVVALV) threads the bilayer. Positions 43 and 47 each coordinate Zn(2+). Over 57-78 (AERFARRTHATQKNTFGWIRAE) the chain is Cytoplasmic. A helical membrane pass occupies residues 79 to 99 (VMGALVNAIFLTGLCFAILLE). At 100–113 (AIERFIEPHEMQQP) the chain is on the extracellular side. Residues 114 to 134 (LVVLGVGVAGLLVNVLGLCLF) form a helical membrane-spanning segment. Over 135 to 248 (HHHSGFSQDS…RAGQLNMRGV (114 aa)) the chain is Cytoplasmic. The interval 142 to 217 (QDSGHGHSHG…DPENPRSGDT (76 aa)) is disordered. The 6 X 2 AA approximate repeats of H-G stretch occupies residues 146 to 158 (HGHSHGGHGHGHG). The segment covering 147 to 167 (GHSHGGHGHGHGLPKGPRVKS) has biased composition (basic residues). Positions 189 to 201 (TNTLVANTSNSNG) are enriched in polar residues. The helical transmembrane segment at 249–269 (FLHVLGDALGSVIVVVNALVF) threads the bilayer. 2 residues coordinate Zn(2+): H251 and D255. Residues 270 to 308 (YFSWKGCSEGDFCVNPCFPDPCKAFVEIINSTHASVYEA) lie on the Extracellular side of the membrane. An N-linked (GlcNAc...) asparagine glycan is attached at N299. The chain crosses the membrane as a helical span at residues 309 to 329 (GPCWVLYLDPTLCVVMVCILL). At 330 to 507 (YTTYPLLKES…MPNKQPESSL (178 aa)) the chain is on the cytoplasmic side. A Phosphoserine modification is found at S506.

Belongs to the cation diffusion facilitator (CDF) transporter (TC 2.A.4) family. SLC30A subfamily. In terms of assembly, homodimer. Interacts with TMEM163. Interacts and forms a complex with TMC6 and TMC8; the interaction regulates zinc transport into the ER. (Microbial infection) Interacts with human papillomavirus 16/HPV16 protein E5; the interaction alleviates SLC30A1-mediated transcription factors inhibition. N-glycosylated at Asn-299. N-glycosylation promotes endocytosis and degradation through the proteasomal or lysosomal pathways.

It is found in the cell membrane. The protein resides in the basolateral cell membrane. Its subcellular location is the cytoplasmic vesicle membrane. It localises to the cytoplasm. The protein localises to the endoplasmic reticulum membrane. It is found in the golgi apparatus membrane. The protein resides in the nucleus membrane. It carries out the reaction Zn(2+)(in) + 2 H(+)(out) = Zn(2+)(out) + 2 H(+)(in). In terms of biological role, zinc ion:proton antiporter that could function at the plasma membrane mediating zinc efflux from cells against its electrochemical gradient protecting them from intracellular zinc accumulation and toxicity. Alternatively, could prevent the transport to the plasma membrane of CACNB2, the L-type calcium channels regulatory subunit, through a yet to be defined mechanism. By modulating the expression of these channels at the plasma membrane, could prevent calcium and zinc influx into cells. By the same mechanism, could also prevent L-type calcium channels-mediated heavy metal influx into cells. In some cells, could also function as a zinc ion:proton antiporter mediating zinc entry into the lumen of cytoplasmic vesicles. In macrophages, can increase zinc ions concentration into the lumen of cytoplasmic vesicles containing engulfed bacteria and could help inactivate them. Forms a complex with TMC6/EVER1 and TMC8/EVER2 at the ER membrane of keratynocytes which facilitates zinc uptake into the ER. Down-regulates the activity of transcription factors induced by zinc and cytokines. The protein is Proton-coupled zinc antiporter SLC30A1 of Homo sapiens (Human).